The primary structure comprises 476 residues: Transcription factor EB (476 aa).

Disordered stretches follow at residues 1 to 66 (MASR…PPVP) and 107 to 142 (HISP…APNS). The interaction with ACSS2 stretch occupies residues 1–167 (MASRIGLRMQ…DDVIDNIMRL (167 aa)). The segment covering 26–44 (QQQAVMHYMQQQQQQQQQQ) has biased composition (low complexity). Serine 109, serine 114, serine 122, and serine 138 each carry phosphoserine. Residues 132-142 (SSSAGNSAPNS) are compositionally biased toward low complexity. The short motif at 136 to 153 (GNSAPNSPMAMLHIGSNP) is the Nuclear export signal element. Serine 142 carries the post-translational modification Phosphoserine; by MTOR. Residues 156-165 (ELDDVIDNIM) are strong transcription activation domain. Residue threonine 183 is modified to Phosphothreonine. Position 211 is a phosphoserine; by MTOR (serine 211). At cysteine 212 the chain carries S-(2,3-dicarboxypropyl)cysteine. The bHLH domain occupies 235–288 (QKKDNHNLIERRRRFNINDRIKELGMLIPKANDLDVRWNKGTILKASVDYIRRM). The short motif at 245–248 (RRRR) is the Nuclear localization signal element. The interval 298–319 (LENHSRRLEMTNKQLWLRIQEL) is leucine-zipper. Phosphoserine is present on serine 332. A disordered region spans residues 349 to 430 (ELPSEEGPGE…HGSPFPSLSK (82 aa)). The span at 369-390 (PEPLPALPPQAPLPLPTQPPSP) shows a compositional bias: pro residues. Phosphoserine is present on residues serine 423, serine 441, serine 466, serine 467, and serine 469. The span at 447–469 (SDPLLSTMSPEASKASSRRSSFS) shows a compositional bias: low complexity. The segment at 447–476 (SDPLLSTMSPEASKASSRRSSFSMEEGDVL) is disordered.

It belongs to the MiT/TFE family. In terms of assembly, homodimer and heterodimer; with TFE3 or MITF. Interacts (when phosphorylated by MTOR) with YWHAZ; promoting retention in the cytosol. Interacts with IRGM; promoting association between TFEB and PPP3CB and dephosphorylation. Interacts with small GTPases Rag (RagA/RRAGA, RagB/RRAGB, RagC/RRAGC and/or RagD/RRAGD); promoting its recruitment to lysosomal membrane in the presence of nutrients. Interacts with ACSS2. Phosphorylation at Ser-211 by MTOR via non-canonical mTORC1 pathway regulates its subcellular location and activity. When nutrients are present, phosphorylation by MTOR promotes association with 14-3-3/YWHA adapters and retention in the cytosol. Inhibition of mTORC1, starvation and lysosomal disruption, promotes dephosphorylation by calcineurin PPP3CB and translocation to the nucleus. Dephosphorylated by calcineurin PPP3CB in response to lysosomal Ca(2+) release. IRGM promotes dephosphorylation by calcineurin PPP3CB, resulting in TFEB nuclear translocation and stimulation of lysosomal biogenesis. Dephosphorylated by phosphatase PPP3CA following Coxsackievirus B3 infection, leading to nuclear translocation. Exported from the nucleus in a mTORC1-dependent manner in response to nutrient availability. Post-translationally, alkylated via a non-enzymatic covalent modification. Itaconate, an anti-inflammatory metabolite generated in response to lipopolysaccharide, alkylates Cys-212, preventing association with 14-3-3/YWHA adapters, thereby promoting nuclear translocation and activity. In terms of processing, sumoylated; does not affect dimerization with MITF. (Microbial infection) Cleavage by Coxsackievirus B3 protease 3C after site Gln-60. This non-phosphorylated cleavage product retains its ability to interact with TFEB, TFE3 or MITF and presents impaired transcriptional activity, resulting in disruption of lysosomal functions and increased viral infection.

Its subcellular location is the nucleus. It localises to the cytoplasm. It is found in the cytosol. The protein resides in the lysosome membrane. Inhibited by eltrombopag drug, which binds to the bHLH domain and disrupts DNA-binding. Functionally, transcription factor that acts as a master regulator of lysosomal biogenesis, autophagy, lysosomal exocytosis, lipid catabolism, energy metabolism and immune response. Specifically recognizes and binds E-box sequences (5'-CANNTG-3'); efficient DNA-binding requires dimerization with itself or with another MiT/TFE family member such as TFE3 or MITF. Involved in the cellular response to amino acid availability by acting downstream of MTOR: in the presence of nutrients, TFEB phosphorylation by MTOR promotes its cytosolic retention and subsequent inactivation. Upon starvation or lysosomal stress, inhibition of MTOR induces TFEB dephosphorylation, resulting in nuclear localization and transcription factor activity. Specifically recognizes and binds the CLEAR-box sequence (5'-GTCACGTGAC-3') present in the regulatory region of many lysosomal genes, leading to activate their expression, thereby playing a central role in expression of lysosomal genes. Regulates lysosomal positioning in response to nutrient deprivation by promoting the expression of PIP4P1. Acts as a positive regulator of autophagy by promoting expression of genes involved in autophagy. In association with TFE3, activates the expression of CD40L in T-cells, thereby playing a role in T-cell-dependent antibody responses in activated CD4(+) T-cells and thymus-dependent humoral immunity. Specifically recognizes the gamma-E3 box, a subset of E-boxes, present in the heavy-chain immunoglobulin enhancer. Plays a role in the signal transduction processes required for normal vascularization of the placenta. Involved in the immune response to infection by the bacteria S.aureus, S.typhimurium or S.enterica: infection promotes itaconate production, leading to alkylation, resulting in nuclear localization and transcription factor activity. Itaconate-mediated alkylation activates TFEB-dependent lysosomal biogenesis, facilitating the bacteria clearance during the antibacterial innate immune response. In association with ACSS2, promotes the expression of genes involved in lysosome biogenesis and both autophagy upon glucose deprivation. The chain is Transcription factor EB from Homo sapiens (Human).